A 472-amino-acid chain; its full sequence is ATP-dependent rRNA helicase rrp3 (472 aa).

The interval 1–52 (MPAIKKRKIAREAPQQEDHSDSEAHSSASEDAAPNTTEQEQEPSEAPKQAPK) is disordered. Basic and acidic residues predominate over residues 10-24 (AREAPQQEDHSDSEA). The short motif at 52–80 (KSFKELGLIEQLCEACDSMGYKAPTAIQA) is the Q motif element. One can recognise a Helicase ATP-binding domain in the interval 83–254 (IPLALQGRDL…RASLQNPLRV (172 aa)). 96-103 (AETGSGKT) contributes to the ATP binding site. The DEAD box motif lies at 202–205 (DEAD). Residues 282 to 426 (YLVYLLNEFV…EYPAEKDEVM (145 aa)) form the Helicase C-terminal domain. Residues 443-472 (MKNYDEKKGSRGKKFAKGKRSREDMDQEEG) form a disordered region. Residues 452–462 (SRGKKFAKGKR) are compositionally biased toward basic residues.

The protein belongs to the DEAD box helicase family. DDX47/RRP3 subfamily. As to quaternary structure, interacts with the SSU processome.

It localises to the nucleus. The enzyme catalyses ATP + H2O = ADP + phosphate + H(+). Functionally, ATP-dependent rRNA helicase required for pre-ribosomal RNA processing. Involved in the maturation of the 35S-pre-rRNA and to its cleavage to mature 18S rRNA. This Aspergillus oryzae (strain ATCC 42149 / RIB 40) (Yellow koji mold) protein is ATP-dependent rRNA helicase rrp3.